The primary structure comprises 313 residues: Olfactory receptor 10G3 (313 aa).

The Extracellular portion of the chain corresponds to 1-25 (MERINSTLLTAFILTGIPYPLRLRT). Asn5 is a glycosylation site (N-linked (GlcNAc...) asparagine). A helical membrane pass occupies residues 26 to 46 (LFFVFFFLIYILTQLGNLLIL). Residues 47–54 (ITVWADPR) lie on the Cytoplasmic side of the membrane. The chain crosses the membrane as a helical span at residues 55 to 76 (LHARPMYIFLGVLSVIDMSISS). Topologically, residues 77 to 100 (IIVPRLMMNFTLGVKPIPFGGCVA) are extracellular. Asn85 carries an N-linked (GlcNAc...) asparagine glycan. Cys98 and Cys190 are disulfide-bonded. A helical membrane pass occupies residues 101-121 (QLYFYHFLGSTQCFLYTLMAY). Over 122-140 (DRYLAICQPLRYPVLMTAK) the chain is Cytoplasmic. A helical membrane pass occupies residues 141–161 (LSALLVAGAWMAGSIHGALQA). Topologically, residues 162-198 (ILTFRLPYCGPNQVDYFFCDIPAVLRLACADTTVNEL) are extracellular. A helical transmembrane segment spans residues 199 to 218 (VTFVDIGVVVASCFSLILLS). The Cytoplasmic portion of the chain corresponds to 219-238 (YIQIIQAILRIHTADGRRRA). Residues 239–259 (FSTCGAHVTVVTVYYVPCAFI) form a helical membrane-spanning segment. Residues 260–270 (YLRPETNSPLD) lie on the Extracellular side of the membrane. Residues 271 to 291 (GAAALVPTAITPFLNPLIYTL) form a helical membrane-spanning segment. Over 292 to 313 (RNQEVKLALKRMLRSPRTPSEV) the chain is Cytoplasmic.

Belongs to the G-protein coupled receptor 1 family.

It is found in the cell membrane. Its function is as follows. Odorant receptor. The chain is Olfactory receptor 10G3 (OR10G3) from Homo sapiens (Human).